The chain runs to 555 residues: Zinc finger and SCAN domain-containing protein 21 (555 aa).

Disordered stretches follow at residues 1–74 (MTKV…SKDK), 102–133 (TIKAEEDDEKDKGHPSPEISRQRFRQFGYHDT), 204–243 (LDEPGLQVSSPPNEQKQSWEKMSTSGTAMESLSSTETQHV), and 263–354 (EEVF…RPAP). 3 repeat units span residues 18–56 (ESMGPSPIKVEEDEEKDKCCPTLELSHKHFRQSGNQDTL), 57–95 (EPMGPSTIKAEEDESKDKCRPNLEISRKSFKQFGYQDTL), and 96–134 (EQLGPSTIKAEEDDEKDKGHPSPEISRQRFRQFGYHDTP). The segment at 18 to 134 (ESMGPSPIKV…FRQFGYHDTP (117 aa)) is 3 X 39 AA approximate tandem repeats. K26 is covalently cross-linked (Glycyl lysine isopeptide (Lys-Gly) (interchain with G-Cter in SUMO2)). Residues 122 to 204 (RQRFRQFGYH…TLLEDLEQEL (83 aa)) enclose the SCAN box domain. Polar residues predominate over residues 210-240 (QVSSPPNEQKQSWEKMSTSGTAMESLSSTET). A compositionally biased stretch (basic and acidic residues) spans 280 to 302 (PQKEDSADEHRSSEEESHADGLK). Glycyl lysine isopeptide (Lys-Gly) (interchain with G-Cter in SUMO2) cross-links involve residues K302 and K313. A compositionally biased stretch (basic and acidic residues) spans 316–332 (SRSERQWANNLERERGT). 7 C2H2-type zinc fingers span residues 359-381 (YICAECGKAFSNSSNLTKHRRTH), 387-409 (YVCTKCGKAFSHSSNLTLHYRTH), 415-436 (YDCKCGKAFGQSSDLLKHQRMH), 442-464 (YQCKDCGKAFSGKGSLIRHYRIH), 470-492 (YQCNECGKSFSQHAGLSSHQRLH), 498-520 (YKCKECGKAFNHSSNFNKHHRIH), and 526-548 (YWCSHCGKTFCSKSNLSKHQRVH). A Glycyl lysine isopeptide (Lys-Gly) (interchain with G-Cter in SUMO2) cross-link involves residue K431.

It belongs to the krueppel C2H2-type zinc-finger protein family. As to expression, expressed predominantly in the spermatocytes and spermatids of adult testes. It is also present at lower levels in the ovary, brain, spleen, embryo and fetus.

The protein localises to the nucleus. Strong transcriptional activator. Plays an important role in spermatogenesis; essential for the progression of meiotic prophase I in spermatocytes. This Mus musculus (Mouse) protein is Zinc finger and SCAN domain-containing protein 21 (Zscan21).